We begin with the raw amino-acid sequence, 603 residues long: Beta-hexosaminidase (603 aa).

Residues 1–19 form the signal peptide; the sequence is MAYFRLYAVLLAVASSVAA. Catalysis depends on charge relay system residues Asp-225, His-278, and Glu-349. The cysteines at positions 293 and 354 are disulfide-linked. Asn-356 is a glycosylation site (N-linked (GlcNAc...) asparagine). A disulfide bridge connects residues Cys-451 and Cys-486. Residues Asn-503 and Asn-528 are each glycosylated (N-linked (GlcNAc...) asparagine). Cysteines 586 and 593 form a disulfide.

It belongs to the glycosyl hydrolase 20 family. As to quaternary structure, homodimer.

The protein resides in the secreted. The enzyme catalyses Hydrolysis of terminal non-reducing N-acetyl-D-hexosamine residues in N-acetyl-beta-D-hexosaminides.. In terms of biological role, part of the binary chitinolytic system. Involved in hydrolysis of chitobiose and higher chito-oligomers (produced from cell wall chitin by endochitinases), thus contributing to the formation of germ tubes, fruit-bodies and septa during hyphenation. Hydrolyzes synthetic substrates p-nitrophenyl-beta-N-acetyl-glucosamine (pNP-beta-GlcNAc), p-nitrophenyl-beta-N-acetyl-galactosamine (pNP-beta-GalNAc) and 5-bromo-4-chloro-3-indoyl-beta-D-N-glucosaminide (X-GlcNAc). The sequence is that of Beta-hexosaminidase from Emericella nidulans (Aspergillus nidulans).